A 311-amino-acid polypeptide reads, in one-letter code: Aspartate carbamoyltransferase catalytic subunit (311 aa).

Carbamoyl phosphate-binding residues include R55 and T56. Position 85 (K85) interacts with L-aspartate. Positions 106, 135, and 138 each coordinate carbamoyl phosphate. Residues R168 and R230 each contribute to the L-aspartate site. The carbamoyl phosphate site is built by L268 and P269.

This sequence belongs to the aspartate/ornithine carbamoyltransferase superfamily. ATCase family. As to quaternary structure, heterododecamer (2C3:3R2) of six catalytic PyrB chains organized as two trimers (C3), and six regulatory PyrI chains organized as three dimers (R2).

It carries out the reaction carbamoyl phosphate + L-aspartate = N-carbamoyl-L-aspartate + phosphate + H(+). It functions in the pathway pyrimidine metabolism; UMP biosynthesis via de novo pathway; (S)-dihydroorotate from bicarbonate: step 2/3. Functionally, catalyzes the condensation of carbamoyl phosphate and aspartate to form carbamoyl aspartate and inorganic phosphate, the committed step in the de novo pyrimidine nucleotide biosynthesis pathway. In Serratia proteamaculans (strain 568), this protein is Aspartate carbamoyltransferase catalytic subunit.